An 82-amino-acid polypeptide reads, in one-letter code: Putative membrane protein insertion efficiency factor (82 aa).

The tract at residues P63–K82 is disordered.

It belongs to the UPF0161 family.

The protein localises to the cell inner membrane. Its function is as follows. Could be involved in insertion of integral membrane proteins into the membrane. This chain is Putative membrane protein insertion efficiency factor, found in Protochlamydia amoebophila (strain UWE25).